The sequence spans 113 residues: Protein INCREASED RESISTANCE TO MYZUS PERSICAE 1 (113 aa).

The FLZ-type zinc finger occupies 56-100 (DFLKTCSLCNRSLCHHRDIYMYRGNNAFCSLECREKQIKLDEKKA).

Belongs to the FLZ family. Interacts with KIN10 and KIN11 via its FLZ-type zinc finger domain. Interacts with KINB3 via its N-terminal part. Interacts with GEBP.

It localises to the nucleus. The protein resides in the cytoplasm. Functionally, may act as an adapter to facilitate the interaction of SnRK1 complex with effector proteins, conferring tissue- and stimulus-type specific differences in the SnRK1 regulation pathway. This Arabidopsis thaliana (Mouse-ear cress) protein is Protein INCREASED RESISTANCE TO MYZUS PERSICAE 1.